The following is a 344-amino-acid chain: MTDKTILRALKGEVLPTPPVWLMRQAGRYLPEYRATRAQAGDFLSLCYTPDLAAEVTLQPIRRYGFDAAILFADILLLPQALGLDLWFETGEGPRMSTVTSMEGVKGLKGKDDIHDKLAPVYETCKILSRELPKETTFIGFAGMPWTVATYMIAGRGSKDQAAAHKFKDTDRAAFSALIDAVTVATIEYLSKQVEAGCEVVKLFDSWAGSLKGQDFEDFAVEPARVITAEMKRRFPGLPVIAFPREAGQGYIGFAEKTGADCVAIDNSVSPDWAAENVQKGKTCVQGNLDPSYMVTGGQELVEATKKVVAAFKNGPHIFNLGHGITPEANPDNVTLLMETIRKG.

Substrate-binding positions include 24–28 (RQAGR), Phe-43, Asp-74, Tyr-151, Ser-206, and His-323.

This sequence belongs to the uroporphyrinogen decarboxylase family. In terms of assembly, homodimer.

The protein localises to the cytoplasm. The catalysed reaction is uroporphyrinogen III + 4 H(+) = coproporphyrinogen III + 4 CO2. It participates in porphyrin-containing compound metabolism; protoporphyrin-IX biosynthesis; coproporphyrinogen-III from 5-aminolevulinate: step 4/4. Its function is as follows. Catalyzes the decarboxylation of four acetate groups of uroporphyrinogen-III to yield coproporphyrinogen-III. The protein is Uroporphyrinogen decarboxylase of Rhodobacter capsulatus (Rhodopseudomonas capsulata).